We begin with the raw amino-acid sequence, 794 residues long: Elongator complex protein 2 (794 aa).

WD repeat units lie at residues 55-93, 98-140, 147-188, 203-244, 286-328, 337-376, 384-423, 433-472, 557-601, 604-643, 654-693, 705-751, and 759-794; these read EHTK…TTKS, GHTS…YVCF, DGFC…AGEG, GHED…KEQM, GHEG…IWLE, GNSV…PQLW, GHYG…GANP, IHGY…ENFR, GHGY…QIQK, GHQL…VSYQ, VHTR…KESS, LKNE…WKLL, and AHHL…IKLT.

The protein belongs to the WD repeat ELP2 family. In terms of assembly, component of the elongator complex composed of Elp1, Elp2, Elp3, Elp4, Elp5 and Elp6. The elongator complex associates with and stabilizes microtubules; efficient interaction requires the full complex.

Its subcellular location is the cytoplasm. The protein localises to the nucleus. It localises to the cytoskeleton. The protein resides in the spindle. It participates in tRNA modification; 5-methoxycarbonylmethyl-2-thiouridine-tRNA biosynthesis. Component of the elongator complex, which is required for multiple tRNA modifications, including mcm5U (5-methoxycarbonylmethyl uridine), mcm5s2U (5-methoxycarbonylmethyl-2-thiouridine), and ncm5U (5-carbamoylmethyl uridine). The elongator complex catalyzes the formation of carboxymethyluridine in the wobble base at position 34 in tRNAs. Binding by the elongator complex stabilizes microtubules and promotes their growth. This induces central spindle asymmetry, promoting polarized signaling endosome trafficking during asymmetric cell division and cell fate assignation of sensory organ precursor cells. Involved in the regulation of the STAT pathway. In Drosophila melanogaster (Fruit fly), this protein is Elongator complex protein 2.